A 158-amino-acid polypeptide reads, in one-letter code: Transcription antitermination protein NusB (158 aa).

The protein belongs to the NusB family.

Involved in transcription antitermination. Required for transcription of ribosomal RNA (rRNA) genes. Binds specifically to the boxA antiterminator sequence of the ribosomal RNA (rrn) operons. The protein is Transcription antitermination protein NusB of Bartonella henselae (strain ATCC 49882 / DSM 28221 / CCUG 30454 / Houston 1) (Rochalimaea henselae).